The primary structure comprises 362 residues: Talin rod domain-containing protein 1 (362 aa).

The segment at 1–26 (MASGSAGKPTGEAASPAPASAIGGAS) is disordered. A2 is modified (N-acetylalanine). The segment covering 13–26 (AASPAPASAIGGAS) has biased composition (low complexity).

In terms of assembly, may homodimerize. Interacts with F-actin.

Functionally, actin-binding protein which may have an oncogenic function and regulates cell proliferation, migration and invasion in cancer cells. This is Talin rod domain-containing protein 1 from Homo sapiens (Human).